We begin with the raw amino-acid sequence, 155 residues long: Large ribosomal subunit protein uL15 (155 aa).

A compositionally biased stretch (basic and acidic residues) spans 1 to 13 (MKLNELRDCEGAT). A disordered region spans residues 1 to 47 (MKLNELRDCEGATKNRKRIGRGIGSGTGKTGGRGVKGQKSRSGVSLN). Residues 21 to 35 (RGIGSGTGKTGGRGV) are compositionally biased toward gly residues.

This sequence belongs to the universal ribosomal protein uL15 family. Part of the 50S ribosomal subunit.

Functionally, binds to the 23S rRNA. In Bartonella tribocorum (strain CIP 105476 / IBS 506), this protein is Large ribosomal subunit protein uL15.